Reading from the N-terminus, the 439-residue chain is Cobyrinate a,c-diamide synthase (439 aa).

The tract at residues 214–235 (ETARAPPEVATTERNTGDSPAD) is disordered. A GATase cobBQ-type domain is found at 237 to 428 (RVAVAQDSAF…CHCHGESGAF (192 aa)). Cysteine 317 (nucleophile) is an active-site residue.

Belongs to the CobB/CbiA family. The cofactor is Mg(2+).

It carries out the reaction cob(II)yrinate + 2 L-glutamine + 2 ATP + 2 H2O = cob(II)yrinate a,c diamide + 2 L-glutamate + 2 ADP + 2 phosphate + 2 H(+). The protein operates within cofactor biosynthesis; adenosylcobalamin biosynthesis; cob(II)yrinate a,c-diamide from sirohydrochlorin (anaerobic route): step 10/10. In terms of biological role, catalyzes the ATP-dependent amidation of the two carboxylate groups at positions a and c of cobyrinate, using either L-glutamine or ammonia as the nitrogen source. The protein is Cobyrinate a,c-diamide synthase of Haloarcula marismortui (strain ATCC 43049 / DSM 3752 / JCM 8966 / VKM B-1809) (Halobacterium marismortui).